The primary structure comprises 312 residues: Very-long-chain 3-oxoacyl-CoA reductase (312 aa).

The next 3 membrane-spanning stretches (helical) occupy residues 33 to 53, 181 to 201, and 274 to 294; these read VWGIGAGRAALGPGLGAWAVV, GVILNISSAAGMYPTPLLTLY, and HAFMGWVFSILPTSTVMNLLM. An NADP(+)-binding site is contributed by 48-77; that stretch reads GAWAVVTGATDGIGKAYAKELAKRGMKVAL. Ser188 provides a ligand contact to substrate. The Proton acceptor role is filled by Tyr201.

Belongs to the short-chain dehydrogenases/reductases (SDR) family. 17-beta-HSD 3 subfamily. As to expression, brain.

The protein localises to the endoplasmic reticulum membrane. The enzyme catalyses a very-long-chain (3R)-3-hydroxyacyl-CoA + NADP(+) = a very-long-chain 3-oxoacyl-CoA + NADPH + H(+). The catalysed reaction is 17beta-estradiol + NAD(+) = estrone + NADH + H(+). It catalyses the reaction 17beta-estradiol + NADP(+) = estrone + NADPH + H(+). It carries out the reaction 3-oxooctadecanoyl-CoA + NADPH + H(+) = (3R)-hydroxyoctadecanoyl-CoA + NADP(+). The enzyme catalyses (7Z,10Z,13Z,16Z)-3-oxodocosatetraenoyl-CoA + NADPH + H(+) = (3R)-hydroxy-(7Z,10Z,13Z,16Z)-docosatetraenoyl-CoA + NADP(+). The catalysed reaction is 3-oxo-(7Z,10Z,13Z,16Z,19Z)-docosapentaenoyl-CoA + NADPH + H(+) = (3R)-hydroxy-(7Z,10Z,13Z,16Z,19Z)-docosapentaenoyl-CoA + NADP(+). It catalyses the reaction (8Z,11Z,14Z)-3-oxoeicosatrienoyl-CoA + NADPH + H(+) = (3R)-hydroxy-(8Z,11Z,14Z)-eicosatrienoyl-CoA + NADP(+). It participates in lipid metabolism; fatty acid biosynthesis. Its pathway is steroid biosynthesis; estrogen biosynthesis. In terms of biological role, catalyzes the second of the four reactions of the long-chain fatty acids elongation cycle. This endoplasmic reticulum-bound enzymatic process, allows the addition of two carbons to the chain of long- and very long-chain fatty acids/VLCFAs per cycle. This enzyme has a 3-ketoacyl-CoA reductase activity, reducing 3-ketoacyl-CoA to 3-hydroxyacyl-CoA, within each cycle of fatty acid elongation. Thereby, it may participate in the production of VLCFAs of different chain lengths that are involved in multiple biological processes as precursors of membrane lipids and lipid mediators. May also catalyze the transformation of estrone (E1) into estradiol (E2) and play a role in estrogen formation. This chain is Very-long-chain 3-oxoacyl-CoA reductase (HSD17B12), found in Anas platyrhynchos (Mallard).